The chain runs to 108 residues: MFYAIILFILAGLAEIGGGYLVWLWLREAKPFWYGIIGGLILVLYGVIPTLQKFPSFGRVYAAYGGVFVILAVLWGWGIDKKVPDNYDWIGAVICLVGVSVMLWAPRN.

4 helical membrane passes run 5–25 (IILF…VWLW), 31–51 (PFWY…IPTL), 60–80 (VYAA…WGID), and 86–106 (NYDW…LWAP).

This sequence belongs to the UPF0060 family.

It is found in the cell membrane. The sequence is that of UPF0060 membrane protein DSY4629 from Desulfitobacterium hafniense (strain Y51).